The sequence spans 609 residues: Sulfite reductase [NADPH] flavoprotein alpha-component (609 aa).

One can recognise a Flavodoxin-like domain in the interval 72–210 (ITLISASQTG…LAAQWRRQLV (139 aa)). Residues 78-83 (SQTGNA) and 125-128 (STQG) contribute to the FMN site. Residues 244-458 (SSPLQATFAV…IEHNDNFRLP (215 aa)) enclose the FAD-binding FR-type domain. Residues T332, Q366, 396 to 399 (RLYS), 414 to 416 (TVG), Y420, and 429 to 432 (GGAS) contribute to the FAD site. Residues 529–530 (SR), 535–539 (KIYVQ), and D571 each bind NADP(+). Residue Y609 participates in FAD binding.

It belongs to the NADPH-dependent sulphite reductase flavoprotein subunit CysJ family. In the N-terminal section; belongs to the flavodoxin family. The protein in the C-terminal section; belongs to the flavoprotein pyridine nucleotide cytochrome reductase family. As to quaternary structure, alpha(8)-beta(8). The alpha component is a flavoprotein, the beta component is a hemoprotein. Requires FAD as cofactor. The cofactor is FMN.

It carries out the reaction hydrogen sulfide + 3 NADP(+) + 3 H2O = sulfite + 3 NADPH + 4 H(+). It participates in sulfur metabolism; hydrogen sulfide biosynthesis; hydrogen sulfide from sulfite (NADPH route): step 1/1. Component of the sulfite reductase complex that catalyzes the 6-electron reduction of sulfite to sulfide. This is one of several activities required for the biosynthesis of L-cysteine from sulfate. The flavoprotein component catalyzes the electron flow from NADPH -&gt; FAD -&gt; FMN to the hemoprotein component. In Pectobacterium atrosepticum (strain SCRI 1043 / ATCC BAA-672) (Erwinia carotovora subsp. atroseptica), this protein is Sulfite reductase [NADPH] flavoprotein alpha-component.